We begin with the raw amino-acid sequence, 406 residues long: Argininosuccinate synthase (406 aa).

Residues 12 to 20 (AYSGGLDTS) and Ala40 each bind ATP. L-citrulline-binding residues include Tyr92 and Ser97. Gly122 contacts ATP. L-aspartate contacts are provided by Thr124, Asn128, and Asp129. Asn128 lines the L-citrulline pocket. L-citrulline-binding residues include Arg132, Ser181, Ser190, Glu266, and Tyr278.

Belongs to the argininosuccinate synthase family. Type 1 subfamily. As to quaternary structure, homotetramer.

It is found in the cytoplasm. It carries out the reaction L-citrulline + L-aspartate + ATP = 2-(N(omega)-L-arginino)succinate + AMP + diphosphate + H(+). It functions in the pathway amino-acid biosynthesis; L-arginine biosynthesis; L-arginine from L-ornithine and carbamoyl phosphate: step 2/3. In Serratia proteamaculans (strain 568), this protein is Argininosuccinate synthase.